The sequence spans 321 residues: NADPH-dependent codeinone reductase 1-3 (321 aa).

Residues Thr-27 and Asp-51 each coordinate NADPH. Active-site proton donor residues include Tyr-56 and His-119. Position 119 (His-119) interacts with substrate. Residues Gln-187, Ser-214, Leu-216, Ser-264, and Arg-269 each coordinate NADPH. The disordered stretch occupies residues 300–321 (ADFLLSPTGPFKTEEEFWDEKD).

This sequence belongs to the aldo/keto reductase family. Latex secreting cells (laticifer cells). Expressed constitutively in all organs with highest levels in capsules. Restricted to the parietal region of sieve elements adjacent or proximal to laticifers in roots, stems, leaves and carpels.

The protein resides in the cytoplasm. It is found in the cytosol. It carries out the reaction codeine + NADP(+) = codeinone + NADPH + H(+). The enzyme catalyses neopine + NADP(+) = neopinone + NADPH + H(+). It catalyses the reaction morphine + NADP(+) = morphinone + NADPH + H(+). The catalysed reaction is neomorphine + NADP(+) = neomorphinone + NADPH + H(+). Its pathway is alkaloid biosynthesis; morphine biosynthesis. Its function is as follows. NADPH-dependent codeinone reductase involved in biosynthesis of morphinan-type benzylisoquinoline and opiate alkaloids natural products. Reduces codeinone to codeine in the penultimate step in morphine biosynthesis. Can use morphinone, hydrocodone and hydromorphone as substrate during reductive reaction with NADPH as cofactor, and morphine and dihydrocodeine as substrate during oxidative reaction with NADP as cofactor. Converts morphinone to morphine, and neomorphinone to neomorphine. Reduces irreversibly neopinone, a spontaneous isomer of codeinone, to neopine; in planta, neopine levels are limited to low levels. This Papaver somniferum (Opium poppy) protein is NADPH-dependent codeinone reductase 1-3.